Here is a 1208-residue protein sequence, read N- to C-terminus: DNA-directed RNA polymerase subunit beta (1208 aa).

The protein belongs to the RNA polymerase beta chain family. The RNAP catalytic core consists of 2 alpha, 1 beta, 1 beta' and 1 omega subunit. When a sigma factor is associated with the core the holoenzyme is formed, which can initiate transcription.

It carries out the reaction RNA(n) + a ribonucleoside 5'-triphosphate = RNA(n+1) + diphosphate. Functionally, DNA-dependent RNA polymerase catalyzes the transcription of DNA into RNA using the four ribonucleoside triphosphates as substrates. This Enterococcus faecium (Streptococcus faecium) protein is DNA-directed RNA polymerase subunit beta.